The following is a 245-amino-acid chain: U11/U12 small nuclear ribonucleoprotein 35 kDa protein (245 aa).

Positions 51-129 (LTLFVARLNL…HEIFVDYELE (79 aa)) constitute an RRM domain. A compositionally biased stretch (basic and acidic residues) spans 146–162 (GKKESGQLRFGGRDRPF). The interval 146–165 (GKKESGQLRFGGRDRPFRKP) is disordered. Residue K172 forms a Glycyl lysine isopeptide (Lys-Gly) (interchain with G-Cter in SUMO2) linkage. Positions 173 to 222 (NDQFREGKRERRERSRSRERHWDSRMRDHHDRGREKRWQEREPARAWPEG) are disordered. 2 stretches are compositionally biased toward basic and acidic residues: residues 174–185 (DQFREGKRERRE) and 192–216 (RHWD…REPA).

In terms of assembly, component of the U11/U12 snRNPs that are part of the U12-type spliceosome.

The protein resides in the nucleus. This Bos taurus (Bovine) protein is U11/U12 small nuclear ribonucleoprotein 35 kDa protein (SNRNP35).